Here is a 479-residue protein sequence, read N- to C-terminus: D-hydantoinase/dihydropyrimidinase (479 aa).

Residues histidine 59, histidine 61, and lysine 150 each coordinate Zn(2+). N6-carboxylysine is present on lysine 150. Tyrosine 155 provides a ligand contact to substrate. Zn(2+) contacts are provided by histidine 183 and histidine 239. Serine 289 contributes to the substrate binding site. Residue aspartate 316 coordinates Zn(2+). Asparagine 337 lines the substrate pocket.

This sequence belongs to the metallo-dependent hydrolases superfamily. Hydantoinase/dihydropyrimidinase family. Homotetramer. It depends on Zn(2+) as a cofactor. In terms of processing, carboxylation allows a single lysine to coordinate two zinc ions.

It carries out the reaction 5,6-dihydrouracil + H2O = 3-(carbamoylamino)propanoate + H(+). In terms of biological role, catalyzes the hydrolysis of dihydropyrimidines and of the structurally related DL-5-mono-substituted hydantoins, to produce N-carbamoyl-D-amino acids. This chain is D-hydantoinase/dihydropyrimidinase (dht), found in Pseudomonas aeruginosa (strain ATCC 15692 / DSM 22644 / CIP 104116 / JCM 14847 / LMG 12228 / 1C / PRS 101 / PAO1).